Consider the following 259-residue polypeptide: Acetylglutamate kinase (259 aa).

Substrate is bound by residues 45 to 46 (GG), R67, and N159.

This sequence belongs to the acetylglutamate kinase family. ArgB subfamily.

It localises to the cytoplasm. The enzyme catalyses N-acetyl-L-glutamate + ATP = N-acetyl-L-glutamyl 5-phosphate + ADP. It participates in amino-acid biosynthesis; L-arginine biosynthesis; N(2)-acetyl-L-ornithine from L-glutamate: step 2/4. Catalyzes the ATP-dependent phosphorylation of N-acetyl-L-glutamate. The chain is Acetylglutamate kinase from Aeromonas hydrophila subsp. hydrophila (strain ATCC 7966 / DSM 30187 / BCRC 13018 / CCUG 14551 / JCM 1027 / KCTC 2358 / NCIMB 9240 / NCTC 8049).